The sequence spans 351 residues: Photosystem II D2 protein (351 aa).

A helical membrane pass occupies residues 39–59 (TAYLAIGGWLTGTTFVTSWYT). His116 provides a ligand contact to chlorophyll a. The helical transmembrane segment at 123–139 (GFMLRQFEISRLVGIRP) threads the bilayer. Pheophytin a-binding residues include Gln128 and Asn141. A helical transmembrane segment spans residues 151 to 164 (VFVSVFLIYPLGQS). A chlorophyll a-binding site is contributed by His196. The chain crosses the membrane as a helical span at residues 206-226 (GALLSAIHGVTVENTLYEDGE). A plastoquinone is bound by residues His213 and Phe260. His213 contributes to the Fe cation binding site. Fe cation is bound at residue His267. The helical transmembrane segment at 277–293 (GLWTSSIGIIGLALNLR) threads the bilayer.

This sequence belongs to the reaction center PufL/M/PsbA/D family. PSII is composed of 1 copy each of membrane proteins PsbA, PsbB, PsbC, PsbD, PsbE, PsbF, PsbH, PsbI, PsbJ, PsbK, PsbL, PsbM, PsbT, PsbX, PsbY, PsbZ, Psb30/Ycf12, peripheral proteins PsbO, CyanoQ (PsbQ), PsbU, PsbV and a large number of cofactors. It forms dimeric complexes. The cofactor is The D1/D2 heterodimer binds P680, chlorophylls that are the primary electron donor of PSII, and subsequent electron acceptors. It shares a non-heme iron and each subunit binds pheophytin, quinone, additional chlorophylls, carotenoids and lipids. There is also a Cl(-1) ion associated with D1 and D2, which is required for oxygen evolution. The PSII complex binds additional chlorophylls, carotenoids and specific lipids..

It localises to the host cellular thylakoid membrane. The enzyme catalyses 2 a plastoquinone + 4 hnu + 2 H2O = 2 a plastoquinol + O2. In terms of biological role, photosystem II (PSII) is a light-driven water:plastoquinone oxidoreductase that uses light energy to abstract electrons from H(2)O, generating O(2) and a proton gradient subsequently used for ATP formation. It consists of a core antenna complex that captures photons, and an electron transfer chain that converts photonic excitation into a charge separation. The D1/D2 (PsbA/PsbD) reaction center heterodimer binds P680, the primary electron donor of PSII as well as several subsequent electron acceptors. D2 is needed for assembly of a stable PSII complex. The protein is Photosystem II D2 protein (psbD) of Synechococcus.